The sequence spans 561 residues: ATP-dependent RNA helicase MRH4, mitochondrial (561 aa).

Residues 1–26 (MSLFFKPVISPQWSFPVLLKIGVRSY) constitute a mitochondrion transit peptide. A disordered region spans residues 29 to 72 (GPRTKHKGNSPLASVPTGSSNKNRKQKAKGKKGNKKNDPDQAFN). Over residues 50 to 62 (KNRKQKAKGKKGN) the composition is skewed to basic residues. Residues 98–129 (SNFDQLLILPPVRDAVKEIISKESLKLQDSRK) carry the Q motif motif. A Helicase ATP-binding domain is found at 131-319 (TSENIIPSPI…NINHLIFCSA (189 aa)). 144-151 (AIKRISKN) is an ATP binding site. The DEAD box signature appears at 267-270 (SIRM). A Helicase C-terminal domain is found at 350 to 539 (ALDFKVINSA…KQGGRVFMLT (190 aa)).

It belongs to the DEAD box helicase family. MRH4 subfamily.

Its subcellular location is the mitochondrion. The enzyme catalyses ATP + H2O = ADP + phosphate + H(+). Functionally, ATP-binding RNA helicase involved in mitochondrial RNA metabolism. Required for maintenance of mitochondrial DNA. The protein is ATP-dependent RNA helicase MRH4, mitochondrial (MRH4) of Saccharomyces cerevisiae (strain YJM789) (Baker's yeast).